Reading from the N-terminus, the 901-residue chain is Protein translocase subunit SecA (901 aa).

Residues Gln85, 103–107 (GEGKT), and Asp510 contribute to the ATP site. A disordered region spans residues 847-901 (TRINQNNLPVDENSQTTQNSETEDYSDRRIGRNEPCPCGSGKKYKHCHGSRVARQ). The span at 848 to 866 (RINQNNLPVDENSQTTQNS) shows a compositional bias: polar residues. Residues Cys882, Cys884, Cys893, and His894 each contribute to the Zn(2+) site. Over residues 888-901 (KKYKHCHGSRVARQ) the composition is skewed to basic residues.

The protein belongs to the SecA family. As to quaternary structure, monomer and homodimer. Part of the essential Sec protein translocation apparatus which comprises SecA, SecYEG and auxiliary proteins SecDF-YajC and YidC. Requires Zn(2+) as cofactor.

Its subcellular location is the cell inner membrane. The protein resides in the cytoplasm. The catalysed reaction is ATP + H2O + cellular proteinSide 1 = ADP + phosphate + cellular proteinSide 2.. Part of the Sec protein translocase complex. Interacts with the SecYEG preprotein conducting channel. Has a central role in coupling the hydrolysis of ATP to the transfer of proteins into and across the cell membrane, serving both as a receptor for the preprotein-SecB complex and as an ATP-driven molecular motor driving the stepwise translocation of polypeptide chains across the membrane. The polypeptide is Protein translocase subunit SecA (Haemophilus influenzae (strain PittGG)).